The primary structure comprises 181 residues: Mating-type M-specific polypeptide Mc (181 aa).

A DNA-binding region (HMG box) is located at residues 103-171 (TPRPPNAFIL…QHQKMYPGYK (69 aa)).

It localises to the nucleus. The protein resides in the cytoplasm. It is found in the cytoskeleton. The protein localises to the microtubule organizing center. Its subcellular location is the spindle pole body. Its function is as follows. Mating type proteins are sequence specific DNA-binding proteins that act as master switches in yeast differentiation by controlling gene expression in a cell type-specific fashion. Positive regulator of MFM genes. The HMG box recognizes the DNA sequence 5'-AACAAAG-3'. Required for conjugation and efficient meiosis. This chain is Mating-type M-specific polypeptide Mc (mat3-Mc), found in Schizosaccharomyces pombe (Fission yeast).